A 158-amino-acid chain; its full sequence is Nucleoside diphosphate kinase (158 aa).

ATP-binding residues include K16, F64, R92, T98, R109, and N119. H122 functions as the Pros-phosphohistidine intermediate in the catalytic mechanism.

It belongs to the NDK family. It depends on Mg(2+) as a cofactor.

The protein resides in the cytoplasm. The enzyme catalyses a 2'-deoxyribonucleoside 5'-diphosphate + ATP = a 2'-deoxyribonucleoside 5'-triphosphate + ADP. The catalysed reaction is a ribonucleoside 5'-diphosphate + ATP = a ribonucleoside 5'-triphosphate + ADP. Its function is as follows. Major role in the synthesis of nucleoside triphosphates other than ATP. The ATP gamma phosphate is transferred to the NDP beta phosphate via a ping-pong mechanism, using a phosphorylated active-site intermediate. The protein is Nucleoside diphosphate kinase of Haloquadratum walsbyi (strain DSM 16790 / HBSQ001).